Consider the following 335-residue polypeptide: Urokinase plasminogen activator surface receptor (335 aa).

The signal sequence occupies residues 1-22 (MGHPPLLPLLLLLHTCVPASWG). UPAR/Ly6 domains are found at residues 23 to 114 (LRCM…RSRY), 115 to 213 (LECI…PQNG), and 214 to 305 (RQCY…YRSG). 3 cysteine pairs are disulfide-bonded: Cys-25/Cys-46, Cys-28/Cys-34, and Cys-39/Cys-67. Asn-74 carries N-linked (GlcNAc...) asparagine glycosylation. Cystine bridges form between Cys-93-Cys-98, Cys-117-Cys-144, Cys-120-Cys-127, Cys-137-Cys-169, Cys-175-Cys-192, Cys-193-Cys-198, Cys-216-Cys-244, Cys-219-Cys-227, Cys-237-Cys-263, Cys-269-Cys-287, and Cys-288-Cys-293. N-linked (GlcNAc...) asparagine glycosylation occurs at Asn-124. Asn-184, Asn-194, Asn-222, and Asn-255 each carry an N-linked (GlcNAc...) asparagine glycan. Gly-305 carries GPI-anchor amidated glycine lipidation. Positions 306 to 335 (AAPQPGPAHLSLTITLLMTARLWGGTLLWT) are cleaved as a propeptide — removed in mature form.

Monomer. Interacts (via the UPAR/Ly6 domains) with SRPX2. Interacts with MRC2. Interacts with FAP (seprase); the interaction occurs at the cell surface of invadopodia membrane. Interacts with SORL1 (via N-terminal ectodomain); this interaction decreases PLAUR internalization. The ternary complex composed of PLAUR-PLAU-SERPINE1 also interacts with SORL1. Interacts with CD82; this interaction prevents PLAUR from binding to its high affinity ligand PLAU.

It is found in the cell membrane. Its subcellular location is the cell projection. The protein resides in the invadopodium membrane. In terms of biological role, acts as a receptor for urokinase plasminogen activator. Plays a role in localizing and promoting plasmin formation. Mediates the proteolysis-independent signal transduction activation effects of U-PA. It is subject to negative-feedback regulation by U-PA which cleaves it into an inactive form. The protein is Urokinase plasminogen activator surface receptor (PLAUR) of Pan troglodytes (Chimpanzee).